The primary structure comprises 503 residues: Glutamate--tRNA ligase (503 aa).

The 'HIGH' region motif lies at proline 26–leucine 36. Positions threonine 126–alanine 148 are disordered. Over residues valine 130–alanine 148 the composition is skewed to basic and acidic residues. A 'KMSKS' region motif is present at residues lysine 270–arginine 274. ATP is bound at residue lysine 273.

It belongs to the class-I aminoacyl-tRNA synthetase family. Glutamate--tRNA ligase type 1 subfamily. In terms of assembly, monomer.

The protein resides in the cytoplasm. The catalysed reaction is tRNA(Glu) + L-glutamate + ATP = L-glutamyl-tRNA(Glu) + AMP + diphosphate. Functionally, catalyzes the attachment of glutamate to tRNA(Glu) in a two-step reaction: glutamate is first activated by ATP to form Glu-AMP and then transferred to the acceptor end of tRNA(Glu). The chain is Glutamate--tRNA ligase from Saccharopolyspora erythraea (strain ATCC 11635 / DSM 40517 / JCM 4748 / NBRC 13426 / NCIMB 8594 / NRRL 2338).